We begin with the raw amino-acid sequence, 172 residues long: Small ribosomal subunit protein uS5 (172 aa).

Residues 17–80 form the S5 DRBM domain; that stretch reads LREKMISVNR…EQARRNMFKV (64 aa).

This sequence belongs to the universal ribosomal protein uS5 family. As to quaternary structure, part of the 30S ribosomal subunit. Contacts proteins S4 and S8.

Its function is as follows. With S4 and S12 plays an important role in translational accuracy. In terms of biological role, located at the back of the 30S subunit body where it stabilizes the conformation of the head with respect to the body. This chain is Small ribosomal subunit protein uS5, found in Paraburkholderia phytofirmans (strain DSM 17436 / LMG 22146 / PsJN) (Burkholderia phytofirmans).